Consider the following 498-residue polypeptide: ATP synthase subunit beta, chloroplastic (498 aa).

172 to 179 (GGAGVGKT) contributes to the ATP binding site.

Belongs to the ATPase alpha/beta chains family. F-type ATPases have 2 components, CF(1) - the catalytic core - and CF(0) - the membrane proton channel. CF(1) has five subunits: alpha(3), beta(3), gamma(1), delta(1), epsilon(1). CF(0) has four main subunits: a(1), b(1), b'(1) and c(9-12).

The protein resides in the plastid. The protein localises to the chloroplast thylakoid membrane. The catalysed reaction is ATP + H2O + 4 H(+)(in) = ADP + phosphate + 5 H(+)(out). Its function is as follows. Produces ATP from ADP in the presence of a proton gradient across the membrane. The catalytic sites are hosted primarily by the beta subunits. This is ATP synthase subunit beta, chloroplastic from Nicotiana bigelovii (Bigelov's tobacco).